Reading from the N-terminus, the 260-residue chain is uncharacterized protein (260 aa).

An N-terminal signal peptide occupies residues 1 to 22 (MGYSKRFALYISILILIVMVAG). Cysteine 23 is lipidated: N-palmitoyl cysteine. Residue cysteine 23 is the site of S-diacylglycerol cysteine attachment.

Belongs to the staphylococcal tandem lipoprotein family.

The protein resides in the cell membrane. This is an uncharacterized protein from Staphylococcus aureus (strain N315).